The sequence spans 65 residues: MALPKNLIPMPRSRFLRVKCIDCGNEQIVFSNPATTVRCLVCGATLVEPTGGKGVIKAKILEVLE.

Zn(2+)-binding residues include Cys20, Cys23, Cys39, and Cys42. Residues 20–42 (CIDCGNEQIVFSNPATTVRCLVC) form a C4-type zinc finger.

This sequence belongs to the eukaryotic ribosomal protein eS27 family. Part of the 30S ribosomal subunit. It depends on Zn(2+) as a cofactor.

The chain is Small ribosomal subunit protein eS27 from Thermococcus onnurineus (strain NA1).